Reading from the N-terminus, the 780-residue chain is ATP-dependent 6-phosphofructokinase, liver type (780 aa).

N-acetylalanine is present on alanine 2. The segment at 2 to 390 (ATVDLEKLRM…NWKIYKLLAH (389 aa)) is N-terminal catalytic PFK domain 1. ATP is bound by residues glycine 25, 88-89 (RC), and 118-121 (GDGS). Aspartate 119 provides a ligand contact to Mg(2+). Residues 164–166 (SID), arginine 201, 208–210 (MGR), glutamate 264, arginine 292, and 298–301 (HVQR) each bind substrate. Aspartate 166 acts as the Proton acceptor in catalysis. Phosphoserine is present on serine 377. The interval 391–400 (QKVSKEKSNF) is interdomain linker. Residues 401–780 (SLAILNVGAP…RRTLSIDKGF (380 aa)) are C-terminal regulatory PFK domain 2. Residues arginine 470, 527 to 531 (TISNN), arginine 565, 572 to 574 (MGG), and glutamate 628 each bind beta-D-fructose 2,6-bisphosphate. O-linked (GlcNAc) serine glycosylation is present at serine 529. Tyrosine 640 carries the phosphotyrosine modification. Residues arginine 654, 660–663 (HLQQ), and arginine 734 each bind beta-D-fructose 2,6-bisphosphate. A Phosphoserine modification is found at serine 775.

The protein belongs to the phosphofructokinase type A (PFKA) family. ATP-dependent PFK group I subfamily. Eukaryotic two domain clade 'E' sub-subfamily. Homo- and heterotetramers. Phosphofructokinase (PFK) enzyme functions as a tetramer composed of different combinations of 3 types of subunits, called PFKM (M), PFKL (L) and PFKP (P). The composition of the PFK tetramer differs according to the tissue type it is present in. The kinetic and regulatory properties of the tetrameric enzyme are dependent on the subunit composition, hence can vary across tissues. Mg(2+) serves as cofactor. Post-translationally, glcNAcylation at Ser-529 by OGT decreases enzyme activity, leading to redirect glucose flux through the oxidative pentose phosphate pathway. Glycosylation is stimulated by both hypoxia and glucose deprivation.

It localises to the cytoplasm. The enzyme catalyses beta-D-fructose 6-phosphate + ATP = beta-D-fructose 1,6-bisphosphate + ADP + H(+). It functions in the pathway carbohydrate degradation; glycolysis; D-glyceraldehyde 3-phosphate and glycerone phosphate from D-glucose: step 3/4. Its activity is regulated as follows. Allosterically activated by ADP, AMP, or fructose 2,6-bisphosphate, and allosterically inhibited by ATP or citrate. GlcNAcylation by OGT overcomes allosteric regulation. In terms of biological role, catalyzes the phosphorylation of D-fructose 6-phosphate to fructose 1,6-bisphosphate by ATP, the first committing step of glycolysis. Negatively regulates the phagocyte oxidative burst in response to bacterial infection by controlling cellular NADPH biosynthesis and NADPH oxidase-derived reactive oxygen species. Upon macrophage activation, drives the metabolic switch toward glycolysis, thus preventing glucose turnover that produces NADPH via pentose phosphate pathway. This is ATP-dependent 6-phosphofructokinase, liver type from Mus musculus (Mouse).